The chain runs to 107 residues: Disintegrin lebestatin (107 aa).

Residues Met-1–Ser-20 form the signal peptide. The propeptide occupies Lys-21 to Leu-64. Cystine bridges form between Cys-65–Cys-74, Cys-70–Cys-93, Cys-71–Cys-98, and Cys-83–Cys-100. The Disintegrin domain maps to Cys-65 to Gly-105. A Cell attachment site; atypical (KTS) motif is present at residues Lys-85–Ser-87. The propeptide occupies Asn-106–Gly-107.

As to quaternary structure, monomer. Expressed by the venom gland.

The protein resides in the secreted. Specifically interacts with the alpha-1/beta-1 integrin (ITGA1/ITGB1). Exhibits highly inhibitory effects on cell adhesion and cell migration to collagens I and IV. Also shows in vivo anti-angiogenic activity. The polypeptide is Disintegrin lebestatin (Macrovipera lebetinus (Levantine viper)).